Here is a 268-residue protein sequence, read N- to C-terminus: Zinc transporter ZupT (268 aa).

The next 8 membrane-spanning stretches (helical) occupy residues 6 to 26 (IIFA…GGVI), 37 to 57 (FLAG…FVEI), 73 to 93 (GGNW…AVID), 126 to 146 (VLTA…TFVA), 153 to 173 (IAIP…IAVA), 189 to 209 (WATL…ILLM), 211 to 231 (FLGP…MVFI), and 248 to 268 (TAIY…LLFI). Residues Asn-136 and Glu-139 each contribute to the Fe(2+) site. 2 residues coordinate Zn(2+): Glu-139 and His-164. Residues Asn-165, Glu-168, and Glu-197 each contribute to the Fe(2+) site. Position 168 (Glu-168) interacts with Zn(2+).

Belongs to the ZIP transporter (TC 2.A.5) family. ZupT subfamily.

The protein resides in the cell membrane. It carries out the reaction Zn(2+)(in) = Zn(2+)(out). Mediates zinc uptake. May also transport other divalent cations. This is Zinc transporter ZupT from Corynebacterium efficiens (strain DSM 44549 / YS-314 / AJ 12310 / JCM 11189 / NBRC 100395).